Here is a 444-residue protein sequence, read N- to C-terminus: Ribosomal protein uS12 methylthiotransferase RimO (444 aa).

The MTTase N-terminal domain occupies 1 to 117 (MKVGIISLGC…ITEVISSALK (117 aa)). 6 residues coordinate [4Fe-4S] cluster: C10, C46, C80, C154, C158, and C161. The Radical SAM core domain occupies 140-370 (YQPGPSAYIK…WEVQKEITRK (231 aa)). The TRAM domain maps to 373-441 (EGLVGTEMRV…DYDLIGEMTN (69 aa)).

This sequence belongs to the methylthiotransferase family. RimO subfamily. It depends on [4Fe-4S] cluster as a cofactor.

It is found in the cytoplasm. It carries out the reaction L-aspartate(89)-[ribosomal protein uS12]-hydrogen + (sulfur carrier)-SH + AH2 + 2 S-adenosyl-L-methionine = 3-methylsulfanyl-L-aspartate(89)-[ribosomal protein uS12]-hydrogen + (sulfur carrier)-H + 5'-deoxyadenosine + L-methionine + A + S-adenosyl-L-homocysteine + 2 H(+). In terms of biological role, catalyzes the methylthiolation of an aspartic acid residue of ribosomal protein uS12. The protein is Ribosomal protein uS12 methylthiotransferase RimO of Natranaerobius thermophilus (strain ATCC BAA-1301 / DSM 18059 / JW/NM-WN-LF).